Consider the following 92-residue polypeptide: Progonadoliberin-1 (92 aa).

Residues 1 to 23 (MKPIQKLLAGLILLTWCVEGCSS) form the signal peptide. At Q24 the chain carries Pyrrolidone carboxylic acid. At G33 the chain carries Glycine amide.

Belongs to the GnRH family. Post-translationally, the precursor is cleaved by ACE, which removes the Gly-Lys-Arg peptide at the C-terminus, leading to mature hormone. The mature form of Gonadoliberin-1 is also cleaved and degraded by ACE.

The protein localises to the secreted. In terms of biological role, stimulates the secretion of gonadotropins; it stimulates the secretion of both luteinizing and follicle-stimulating hormones. In Homo sapiens (Human), this protein is Progonadoliberin-1 (GNRH1).